A 409-amino-acid chain; its full sequence is Effector protein BipC (409 aa).

Disordered stretches follow at residues 268–287 and 330–396; these read RETG…RMSD and SGGQ…VAND. Positions 360–369 are enriched in low complexity; sequence AQQTAMAAAS. Residues 370–382 are compositionally biased toward basic and acidic residues; the sequence is ARDEAAHRGRDAA.

Belongs to the SctB/SipC family.

Its subcellular location is the secreted. In Burkholderia thailandensis (strain ATCC 700388 / DSM 13276 / CCUG 48851 / CIP 106301 / E264), this protein is Effector protein BipC (bipC).